The primary structure comprises 1865 residues: Transient receptor potential cation channel subfamily M member 7 (1865 aa).

Methionine 1 is subject to N-acetylmethionine. The Cytoplasmic segment spans residues 1-850 (MSQKSWIEST…ITRKFYAFYH (850 aa)). At serine 101 the chain carries Phosphoserine. A compositionally biased stretch (low complexity) spans 544 to 555 (NRRSGRNTSSST). A disordered region spans residues 544–575 (NRRSGRNTSSSTPQLRKSHESFGNRADKKEKM). Residues 560-573 (KSHESFGNRADKKE) show a composition bias toward basic and acidic residues. A helical membrane pass occupies residues 851–876 (APIVKFWFNTLAYLGFLMLYTFVVLV). At 877–882 (QMEQLP) the chain is on the extracellular side. A helical transmembrane segment spans residues 883 to 904 (SVQEWIVIAYIFTYAIEKVREI). The Cytoplasmic segment spans residues 905-923 (FMSEAGKVNQKIKVWFSDY). Residues 924-943 (FNISDTIAIISFFIGFGLRF) traverse the membrane as a helical segment. At 944–956 (GAKWNFANAYDNH) the chain is on the extracellular side. The chain crosses the membrane as a helical span at residues 957 to 980 (VFVAGRLIYCLNIIFWYVRLLDFL). The Cytoplasmic segment spans residues 981–999 (AVNQQAGPYVMMIGKMVAN). A helical transmembrane segment spans residues 1000–1023 (MFYIVVIMALVLLSFGVPRKAILY). The Extracellular segment spans residues 1024-1025 (PH). Residues 1026-1066 (EAPSWTLAKDIVFHPYWMIFGEVYAYEIDVCANDSVIPQIC) constitute an intramembrane region (pore-forming). Topologically, residues 1067 to 1069 (GPG) are extracellular. A helical transmembrane segment spans residues 1070–1098 (TWLTPFLQAVYLFVQYIIMVNLLIAFFNN). Over 1099–1865 (VYLQVKAISN…ESTNSVRLML (767 aa)) the chain is Cytoplasmic. 3 S-palmitoyl cysteine lipidation sites follow: cysteine 1143, cysteine 1144, and cysteine 1146. Threonine 1163 carries the post-translational modification Phosphothreonine; by autocatalysis. Phosphoserine; by autocatalysis is present on residues serine 1191 and serine 1193. Residues 1198–1250 (RVTFERVEQMCIQIKEVGDRVNYIKRSLQSLDSQIGHLQDLSALTVDTLKTLT) adopt a coiled-coil conformation. Serine 1224 is subject to Phosphoserine. 2 positions are modified to phosphoserine; by autocatalysis: serine 1255 and serine 1258. A Phosphothreonine; by autocatalysis modification is found at threonine 1265. At serine 1287 the chain carries Phosphoserine; by autocatalysis. Residue serine 1301 is modified to Phosphoserine. Serine 1358 bears the Phosphoserine; by autocatalysis mark. Phosphoserine is present on residues serine 1361 and serine 1386. Residues 1386 to 1398 (SSSTSIPHLSSPP) show a composition bias toward low complexity. The segment at 1386-1407 (SSSTSIPHLSSPPTKFFVSTPS) is disordered. 2 positions are modified to phosphoserine; by autocatalysis: serine 1387 and serine 1390. A phosphoserine mark is found at serine 1395 and serine 1396. At serine 1404 the chain carries Phosphoserine; by autocatalysis. At threonine 1405 the chain carries Phosphothreonine; by autocatalysis. The residue at position 1407 (serine 1407) is a Phosphoserine; by autocatalysis. Threonine 1435 bears the Phosphothreonine; by autocatalysis mark. The residue at position 1446 (serine 1446) is a Phosphoserine; by autocatalysis. Threonine 1455 bears the Phosphothreonine; by autocatalysis mark. Phosphoserine; by autocatalysis occurs at positions 1456 and 1463. Threonine 1467 carries the phosphothreonine modification. Phosphoserine; by autocatalysis is present on serine 1468. Threonine 1471 carries the post-translational modification Phosphothreonine; by autocatalysis. 2 positions are modified to phosphoserine; by autocatalysis: serine 1476 and serine 1477. Threonine 1482 is modified (phosphothreonine; by autocatalysis). The tract at residues 1492 to 1511 (HSKQAEKISRRPSTEDTHEV) is disordered. A Phosphoserine; by autocatalysis modification is found at serine 1493. Over residues 1494–1511 (KQAEKISRRPSTEDTHEV) the composition is skewed to basic and acidic residues. At serine 1500 the chain carries Phosphoserine. Serine 1504 is modified (phosphoserine; by autocatalysis). Position 1508 is a phosphothreonine; by autocatalysis (threonine 1508). Phosphoserine; by autocatalysis occurs at positions 1513, 1527, and 1533. The segment at 1524-1543 (DRPSNREMPSEEGTLNGLTS) is disordered. 2 positions are modified to phosphothreonine; by autocatalysis: threonine 1537 and threonine 1542. Residue serine 1543 is modified to Phosphoserine; by autocatalysis. Threonine 1551 carries the phosphothreonine; by autocatalysis modification. Phosphoserine; by autocatalysis occurs at positions 1567 and 1569. The residue at position 1583 (threonine 1583) is a Phosphothreonine; by autocatalysis. The Alpha-type protein kinase domain maps to 1594-1824 (ILNNSMSSWS…CCRKLKLPDL (231 aa)). Serine 1598 and serine 1615 each carry phosphoserine; by autocatalysis. ADP contacts are provided by glycine 1621, glycine 1622, leucine 1623, arginine 1624, and lysine 1648. Serine 1660 is subject to Phosphoserine; by autocatalysis. Threonine 1685 is subject to Phosphothreonine; by autocatalysis. Residues glutamate 1720, glutamate 1721, and methionine 1723 each contribute to the ADP site. Histidine 1753 is a binding site for Zn(2+). Aspartate 1767 functions as the Proton acceptor in the catalytic mechanism. Residue aspartate 1777 coordinates ADP. Serine 1779 carries the phosphoserine; by autocatalysis modification. Zn(2+)-binding residues include histidine 1810, cysteine 1812, and cysteine 1816. Threonine 1830 bears the Phosphothreonine; by autocatalysis mark. A disordered region spans residues 1836–1865 (FPQDEPSDLNLQPGNSTKESESTNSVRLML). Polar residues predominate over residues 1844 to 1865 (LNLQPGNSTKESESTNSVRLML). Residue serine 1851 is modified to Phosphoserine. Phosphoserine; by autocatalysis is present on serine 1860.

This sequence in the C-terminal section; belongs to the protein kinase superfamily. Alpha-type protein kinase family. ALPK subfamily. The protein in the N-terminal section; belongs to the transient receptor (TC 1.A.4) family. LTrpC subfamily. TRPM7 sub-subfamily. In terms of assembly, homotetramer. Interacts with PLCB1. Forms heteromers with TRPM6; heteromeric channels are functionally different from the homomeric channels. It depends on Zn(2+) as a cofactor. Palmitoylated; palmitoylation at Cys-1143, Cys-1144 and Cys-1146 promotes TRPM7 trafficking from the Golgi to the surface membrane. In terms of processing, autophosphorylated; autophosphorylation of C-terminus regulates TRPM7 kinase activity towards its substrates. Post-translationally, the C-terminal kinase domain can be cleaved from the channel segment in a cell-type-specific fashion. TRPM7 is cleaved by caspase-8, dissociating the kinase from the ion-conducting pore. The cleaved kinase fragments (M7CKs) can translocate to the cell nucleus and binds chromatin-remodeling complex proteins in a Zn(2+)-dependent manner to ultimately phosphorylate specific Ser/Thr residues of histones.

The protein resides in the cell membrane. Its subcellular location is the cytoplasmic vesicle membrane. The protein localises to the nucleus. It carries out the reaction L-seryl-[protein] + ATP = O-phospho-L-seryl-[protein] + ADP + H(+). The enzyme catalyses L-threonyl-[protein] + ATP = O-phospho-L-threonyl-[protein] + ADP + H(+). It catalyses the reaction Mg(2+)(in) = Mg(2+)(out). The catalysed reaction is Ca(2+)(in) = Ca(2+)(out). It carries out the reaction Zn(2+)(in) = Zn(2+)(out). Channel displays constitutive activity. Channel activity is negatively regulated by cytosolic Mg(2+) and Mg-ATP. Channel activity is negatively regulated by low intracellular pH. Resting free cytosolic Mg(2+) and Mg-ATP concentrations seem to be sufficient to block native TRPM7 channel activity. TRPM7 channel activity is highly dependent on membrane levels of phosphatidylinositol 4,5 bisphosphate (PIP2). PIP2 hydrolysis negatively regulates TRPM7 channel activity. TRPM7 kinase activity does not affect channel activity. The kinase activity is controlled through the autophosphorylation of a serine/threonine-rich region located N-terminal to the catalytic domain. Bifunctional protein that combines an ion channel with an intrinsic kinase domain, enabling it to modulate cellular functions either by conducting ions through the pore or by phosphorylating downstream proteins via its kinase domain. The channel is highly permeable to divalent cations, specifically calcium (Ca2+), magnesium (Mg2+) and zinc (Zn2+) and mediates their influx. Controls a wide range of biological processes such as Ca2(+), Mg(2+) and Zn(2+) homeostasis, vesicular Zn(2+) release channel and intracellular Ca(2+) signaling, embryonic development, immune responses, cell motility, proliferation and differentiation. The C-terminal alpha-kinase domain autophosphorylates cytoplasmic residues of TRPM7. In vivo, TRPM7 phosphorylates SMAD2, suggesting that TRPM7 kinase may play a role in activating SMAD signaling pathways. In vitro, TRPM7 kinase phosphorylates ANXA1 (annexin A1), myosin II isoforms and a variety of proteins with diverse cellular functions. Its function is as follows. The cleaved channel exhibits substantially higher current and potentiates Fas receptor signaling. Functionally, the C-terminal kinase domain can be cleaved from the channel segment in a cell-type-specific fashion. In immune cells, the TRPM7 kinase domain is clipped from the channel domain by caspases in response to Fas-receptor stimulation. The cleaved kinase fragments can translocate to the nucleus, and bind chromatin-remodeling complex proteins in a Zn(2+)-dependent manner to ultimately phosphorylate specific Ser/Thr residues of histones known to be functionally important for cell differentiation and embryonic development. The chain is Transient receptor potential cation channel subfamily M member 7 (TRPM7) from Homo sapiens (Human).